Consider the following 192-residue polypeptide: GTP cyclohydrolase 1 (192 aa).

Zn(2+) contacts are provided by Cys-76, His-79, and Cys-148.

Belongs to the GTP cyclohydrolase I family. As to quaternary structure, toroid-shaped homodecamer, composed of two pentamers of five dimers.

The catalysed reaction is GTP + H2O = 7,8-dihydroneopterin 3'-triphosphate + formate + H(+). Its pathway is cofactor biosynthesis; 7,8-dihydroneopterin triphosphate biosynthesis; 7,8-dihydroneopterin triphosphate from GTP: step 1/1. The polypeptide is GTP cyclohydrolase 1 (Carboxydothermus hydrogenoformans (strain ATCC BAA-161 / DSM 6008 / Z-2901)).